The chain runs to 90 residues: Small ribosomal subunit protein uS19 (90 aa).

It belongs to the universal ribosomal protein uS19 family.

Protein S19 forms a complex with S13 that binds strongly to the 16S ribosomal RNA. The chain is Small ribosomal subunit protein uS19 from Mesomycoplasma hyopneumoniae (strain 232) (Mycoplasma hyopneumoniae).